The following is a 209-amino-acid chain: tRNA (guanine-N(7)-)-methyltransferase (209 aa).

3 residues coordinate S-adenosyl-L-methionine: glutamate 40, glutamate 65, and aspartate 114. Residue aspartate 114 is part of the active site. Substrate contacts are provided by residues aspartate 150 and 188–191 (TAFE).

Belongs to the class I-like SAM-binding methyltransferase superfamily. TrmB family.

It catalyses the reaction guanosine(46) in tRNA + S-adenosyl-L-methionine = N(7)-methylguanosine(46) in tRNA + S-adenosyl-L-homocysteine. Its pathway is tRNA modification; N(7)-methylguanine-tRNA biosynthesis. Its function is as follows. Catalyzes the formation of N(7)-methylguanine at position 46 (m7G46) in tRNA. The sequence is that of tRNA (guanine-N(7)-)-methyltransferase from Bdellovibrio bacteriovorus (strain ATCC 15356 / DSM 50701 / NCIMB 9529 / HD100).